We begin with the raw amino-acid sequence, 64 residues long: Large ribosomal subunit protein bL32 (64 aa).

Over residues 1–16 the composition is skewed to basic residues; the sequence is MAVQKSRKTRSRRGMR. Positions 1-64 are disordered; it reads MAVQKSRKTR…TPKESYEDEE (64 aa).

It belongs to the bacterial ribosomal protein bL32 family.

This is Large ribosomal subunit protein bL32 from Coxiella burnetii (strain CbuK_Q154) (Coxiella burnetii (strain Q154)).